The following is a 54-amino-acid chain: ATP synthase F(0) complex subunit 8 (54 aa).

Residues 9–29 (WFMILFFSWVIFLTIIPTKII) traverse the membrane as a helical segment. The interval 35–54 (NDPTQVDAKEHKNDTWNWPW) is disordered.

Belongs to the ATPase protein 8 family. In terms of assembly, component of the ATP synthase complex composed at least of ATP5F1A/subunit alpha, ATP5F1B/subunit beta, ATP5MC1/subunit c (homooctomer), MT-ATP6/subunit a, MT-ATP8/subunit 8, ATP5ME/subunit e, ATP5MF/subunit f, ATP5MG/subunit g, ATP5MK/subunit k, ATP5MJ/subunit j, ATP5F1C/subunit gamma, ATP5F1D/subunit delta, ATP5F1E/subunit epsilon, ATP5PF/subunit F6, ATP5PB/subunit b, ATP5PD/subunit d, ATP5PO/subunit OSCP. ATP synthase complex consists of a soluble F(1) head domain (subunits alpha(3) and beta(3)) - the catalytic core - and a membrane F(0) domain - the membrane proton channel (subunits c, a, 8, e, f, g, k and j). These two domains are linked by a central stalk (subunits gamma, delta, and epsilon) rotating inside the F1 region and a stationary peripheral stalk (subunits F6, b, d, and OSCP).

Its subcellular location is the mitochondrion membrane. In terms of biological role, subunit 8, of the mitochondrial membrane ATP synthase complex (F(1)F(0) ATP synthase or Complex V) that produces ATP from ADP in the presence of a proton gradient across the membrane which is generated by electron transport complexes of the respiratory chain. ATP synthase complex consist of a soluble F(1) head domain - the catalytic core - and a membrane F(1) domain - the membrane proton channel. These two domains are linked by a central stalk rotating inside the F(1) region and a stationary peripheral stalk. During catalysis, ATP synthesis in the catalytic domain of F(1) is coupled via a rotary mechanism of the central stalk subunits to proton translocation. In vivo, can only synthesize ATP although its ATP hydrolase activity can be activated artificially in vitro. Part of the complex F(0) domain. This chain is ATP synthase F(0) complex subunit 8, found in Danio rerio (Zebrafish).